We begin with the raw amino-acid sequence, 618 residues long: 1-deoxy-D-xylulose-5-phosphate synthase (618 aa).

Residues His-74 and 115-117 (GHS) each bind thiamine diphosphate. Residue Asp-146 coordinates Mg(2+). Thiamine diphosphate contacts are provided by residues 147 to 148 (GA), Asn-175, Tyr-286, and Glu-366. Asn-175 is a Mg(2+) binding site.

It belongs to the transketolase family. DXPS subfamily. In terms of assembly, homodimer. It depends on Mg(2+) as a cofactor. Thiamine diphosphate serves as cofactor.

The enzyme catalyses D-glyceraldehyde 3-phosphate + pyruvate + H(+) = 1-deoxy-D-xylulose 5-phosphate + CO2. It functions in the pathway metabolic intermediate biosynthesis; 1-deoxy-D-xylulose 5-phosphate biosynthesis; 1-deoxy-D-xylulose 5-phosphate from D-glyceraldehyde 3-phosphate and pyruvate: step 1/1. Catalyzes the acyloin condensation reaction between C atoms 2 and 3 of pyruvate and glyceraldehyde 3-phosphate to yield 1-deoxy-D-xylulose-5-phosphate (DXP). The polypeptide is 1-deoxy-D-xylulose-5-phosphate synthase (Clostridium tetani (strain Massachusetts / E88)).